Reading from the N-terminus, the 346-residue chain is [LysW]-lysine/[LysW]-ornithine hydrolase (346 aa).

Residue His68 coordinates Zn(2+). The active site involves Asp70. Asp92 serves as a coordination point for Zn(2+). Glu122 acts as the Proton acceptor in catalysis. Residues Glu123, Glu146, and His317 each coordinate Zn(2+).

This sequence belongs to the peptidase M20A family. LysK subfamily. Zn(2+) serves as cofactor. Requires Co(2+) as cofactor.

The protein localises to the cytoplasm. The enzyme catalyses [amino-group carrier protein]-C-terminal-gamma-(L-lysyl)-L-glutamate + H2O = [amino-group carrier protein]-C-terminal-L-glutamate + L-lysine. It catalyses the reaction [amino-group carrier protein]-C-terminal-gamma-(L-ornithyl)-L-glutamate + H2O = [amino-group carrier protein]-C-terminal-L-glutamate + L-ornithine. Its pathway is amino-acid biosynthesis; L-lysine biosynthesis via AAA pathway; L-lysine from L-alpha-aminoadipate (Thermus route): step 5/5. It functions in the pathway amino-acid biosynthesis; L-arginine biosynthesis. In terms of biological role, catalyzes the release of L-lysine from [LysW]-gamma-L-lysine and the release of L-ornithine from [LysW]-L-ornithine. This chain is [LysW]-lysine/[LysW]-ornithine hydrolase, found in Saccharolobus solfataricus (strain ATCC 35092 / DSM 1617 / JCM 11322 / P2) (Sulfolobus solfataricus).